A 217-amino-acid chain; its full sequence is Glycerol-3-phosphate acyltransferase (217 aa).

Helical transmembrane passes span 1-21 (MAWA…SIPT), 54-74 (TAAI…VGGV), 84-104 (AIVP…AAIL), 126-146 (VLLV…LFML), and 165-185 (LLML…LAGI).

It belongs to the PlsY family. Probably interacts with PlsX.

The protein localises to the cell inner membrane. It carries out the reaction an acyl phosphate + sn-glycerol 3-phosphate = a 1-acyl-sn-glycero-3-phosphate + phosphate. It participates in lipid metabolism; phospholipid metabolism. In terms of biological role, catalyzes the transfer of an acyl group from acyl-phosphate (acyl-PO(4)) to glycerol-3-phosphate (G3P) to form lysophosphatidic acid (LPA). This enzyme utilizes acyl-phosphate as fatty acyl donor, but not acyl-CoA or acyl-ACP. The protein is Glycerol-3-phosphate acyltransferase of Rippkaea orientalis (strain PCC 8801 / RF-1) (Cyanothece sp. (strain PCC 8801)).